A 203-amino-acid chain; its full sequence is Small ribosomal subunit protein uS4 (203 aa).

An S4 RNA-binding domain is found at 93-153 (RRFDNVVFRA…QKSQNLDAVA (61 aa)).

Belongs to the universal ribosomal protein uS4 family. Part of the 30S ribosomal subunit. Contacts protein S5. The interaction surface between S4 and S5 is involved in control of translational fidelity.

Functionally, one of the primary rRNA binding proteins, it binds directly to 16S rRNA where it nucleates assembly of the body of the 30S subunit. Its function is as follows. With S5 and S12 plays an important role in translational accuracy. The sequence is that of Small ribosomal subunit protein uS4 from Chlorobium phaeobacteroides (strain BS1).